Consider the following 490-residue polypeptide: MLRQVLRRSLSDSRRPLRSVGSISCSARASGIGMRAYSSQIFKEGMQLETHTDIQSAAREQAQERMGSEALASNNSVLKHAYQESVDHGTRPIYLDMQATTPTDPRVVDTMLKFYTGLYGNPHSNTHSYGWETSQEVEKARKNVADVIKADPKEIIFTSGATESNNMALKGVARFYKKRKNHIITTRTEHKCVLEAARSMKDEGFDVTFLNVNEDGLVSLEELEQAIRPETSLVSVMSVNNEIGVVQPIKEIGAICRRHKVFFHSDAAQAYGKIPIDVDEMNIDLLSISSHKIYGPKGIGALYVRRRPRVRMEPLLSGGGQERGFRSGTLPPPLVVGLGHAAKLMVEEYEYDSAHVRRLSDRLLKGLLSIEQTTLNGSADHRYPGCVNVSFAFVEGESLLMALRDIALSSGSACTSASLEPSYVLHAIGRDDALAHSSIRFGIGRFTTEAEVDYVIKAITERVEFLRELSPLWEMYKDGIDLNTIEWSGH.

Pyridoxal 5'-phosphate-binding positions include 161 to 162 (AT), Asn-241, Gln-269, and 289 to 291 (SSH). Lys-292 bears the N6-(pyridoxal phosphate)lysine mark. Thr-329 is a pyridoxal 5'-phosphate binding site. The active-site Cysteine persulfide intermediate is Cys-414. Cys-414 serves as a coordination point for [2Fe-2S] cluster.

This sequence belongs to the class-V pyridoxal-phosphate-dependent aminotransferase family. NifS/IscS subfamily. Pyridoxal 5'-phosphate serves as cofactor.

It localises to the mitochondrion. It catalyses the reaction (sulfur carrier)-H + L-cysteine = (sulfur carrier)-SH + L-alanine. Catalyzes the removal of elemental sulfur from cysteine to produce alanine. It supplies the inorganic sulfur for iron-sulfur (Fe-S) clusters. Plays a role in both tRNA-processing and mitochondrial metabolism. Involved in the 2-thio-modification of both 5-carboxymethylaminomethyl-2-thiouridine in mitochondrial tRNAs and 5-methoxycarbonylmethyl-2-thiouridine (mcm5s2U) in cytoplasmic tRNAs. The chain is Cysteine desulfurase, mitochondrial from Eremothecium gossypii (strain ATCC 10895 / CBS 109.51 / FGSC 9923 / NRRL Y-1056) (Yeast).